Reading from the N-terminus, the 466-residue chain is cGMP-specific 3',5'-cGMP phosphodiesterase 3 (466 aa).

Residues 1–120 (MAPQQNIMKQ…NSNNNNSNNN (120 aa)) are compositionally biased toward low complexity. The tract at residues 1-150 (MAPQQNIMKQ…NNNKIRGYND (150 aa)) is disordered. Acidic residues predominate over residues 123 to 134 (DDEEEEGDDEDN). Residues 135–150 (NNNNNSNNNKIRGYND) show a composition bias toward low complexity. The PDEase domain maps to 137-458 (NNNSNNNKIR…EIWSNNGSSS (322 aa)). His-213 serves as the catalytic Proton donor. Residues His-217, His-253, Asp-254, and Asp-364 each coordinate a divalent metal cation.

Belongs to the cyclic nucleotide phosphodiesterase family. It depends on a divalent metal cation as a cofactor.

It is found in the cytoplasm. The protein resides in the cytosol. The catalysed reaction is 3',5'-cyclic GMP + H2O = GMP + H(+). Inhibited by 3-isobutyl-1-methylxanthine (IBMX). Phosphodiesterase specific for cGMP, which is not activated by cGMP. Involved in the degradation of intracellular cGMP. The chain is cGMP-specific 3',5'-cGMP phosphodiesterase 3 (pde3) from Dictyostelium discoideum (Social amoeba).